We begin with the raw amino-acid sequence, 409 residues long: Short chain dehydrogenase sirS (409 aa).

NADP(+)-binding residues include valine 49, leucine 68, lysine 195, valine 288, threonine 290, and alanine 299. The segment at 306–332 is disordered; sequence GVGPEGAGEEEGKGEAEGGAKGATGWS.

It belongs to the short-chain dehydrogenases/reductases (SDR) family. Highly divergent.

It functions in the pathway mycotoxin biosynthesis. In terms of biological role, short chain dehydrogenase; part of the gene cluster that mediates the biosynthesis of sirodesmin PL, an epipolythiodioxopiperazine (ETP) characterized by a disulfide bridged cyclic dipeptide and that acts as a phytotoxin which is involved in the blackleg didease of canola. SirD catalyzes the O-prenylation of L-tyrosine (L-Tyr) in the presence of dimethylallyl diphosphate (DMAPP) to yield 4-O-dimethylallyl-L-Tyr, and therefore represents probably the first pathway-specific enzyme in the biosynthesis of sirodesmin PL. 4-O-dimethylallyl-L-Tyr, then undergoes condensation with L-Ser in a reaction catalyzed by the non-ribosomal peptide synthase sirP to form the diketopiperazine (DKP) backbone. Further bishydroxylation of the DKP performed by the cytochrome P450 monooxygenase sirC leads to the production of the intermediate phomamide. This step is essential to form the reactive thiol group required for toxicity of sirodesmin PL. The next steps of sirodesmin biosynthesis are not well understood yet, but some predictions could be made from intermediate compounds identification. Phomamide is converted into phomalizarine via oxidation, probably by sirT. Further oxidation, methylation (by sirM or sirN) and reduction steps convert phomalizarine to deacetyl sirodesmin. Finally, acetyltransferase sirH probably acetylates deacetyl sirodesmin to produce sirodesmin PL. This is Short chain dehydrogenase sirS from Leptosphaeria maculans (Blackleg fungus).